We begin with the raw amino-acid sequence, 469 residues long: Glutamate--tRNA ligase (469 aa).

The 'HIGH' region motif lies at 12 to 22 (PSPTGFIHLGN). A 'KMSKS' region motif is present at residues 244 to 248 (KMSKR). Residue K247 participates in ATP binding.

This sequence belongs to the class-I aminoacyl-tRNA synthetase family. Glutamate--tRNA ligase type 1 subfamily. As to quaternary structure, monomer.

It is found in the cytoplasm. The catalysed reaction is tRNA(Glu) + L-glutamate + ATP = L-glutamyl-tRNA(Glu) + AMP + diphosphate. Functionally, catalyzes the attachment of glutamate to tRNA(Glu) in a two-step reaction: glutamate is first activated by ATP to form Glu-AMP and then transferred to the acceptor end of tRNA(Glu). The chain is Glutamate--tRNA ligase from Acidovorax sp. (strain JS42).